We begin with the raw amino-acid sequence, 307 residues long: Heparan sulfate glucosamine 3-O-sulfotransferase 1 (307 aa).

The first 20 residues, 1–20 (MAALLLGAVLLVAQPQLVPS), serve as a signal peptide directing secretion. Residue Asn-48 is glycosylated (N-linked (GlcNAc...) asparagine). 3'-phosphoadenylyl sulfate-binding positions include 64–68 (KGGTR), Arg-147, and Ser-155. 3 N-linked (GlcNAc...) asparagine glycosylation sites follow: Asn-192, Asn-242, and Asn-249. Tyr-255 is a binding site for 3'-phosphoadenylyl sulfate. The cysteines at positions 256 and 265 are disulfide-linked. 270 to 274 (KGRAH) provides a ligand contact to 3'-phosphoadenylyl sulfate.

This sequence belongs to the sulfotransferase 1 family. As to expression, highly expressed in the brain and kidney and weakly expressed in the heart, lung and placenta.

Its subcellular location is the golgi apparatus lumen. It carries out the reaction alpha-D-glucosaminyl-[heparan sulfate](n) + 3'-phosphoadenylyl sulfate = 3-sulfo-alpha-D-glucosaminyl-[heparan sulfate](n) + adenosine 3',5'-bisphosphate + H(+). Its function is as follows. Sulfotransferase that utilizes 3'-phospho-5'-adenylyl sulfate (PAPS) to catalyze the transfer of a sulfo group to position 3 of glucosamine residues in heparan. Catalyzes the rate limiting step in the biosynthesis of heparan sulfate (HSact). This modification is a crucial step in the biosynthesis of anticoagulant heparan sulfate as it completes the structure of the antithrombin pentasaccharide binding site. The chain is Heparan sulfate glucosamine 3-O-sulfotransferase 1 (HS3ST1) from Homo sapiens (Human).